A 93-amino-acid chain; its full sequence is Small ribosomal subunit protein uS19 (93 aa).

This sequence belongs to the universal ribosomal protein uS19 family.

Functionally, protein S19 forms a complex with S13 that binds strongly to the 16S ribosomal RNA. The sequence is that of Small ribosomal subunit protein uS19 from Microcystis aeruginosa (strain NIES-843 / IAM M-2473).